The chain runs to 507 residues: Monocarboxylate transporter 9 (507 aa).

At 1-12 the chain is on the extracellular side; sequence MVYRKPPDGGWG. The helical transmembrane segment at 13 to 33 threads the bilayer; the sequence is WVIVIVSFFTQFLCYGSPLAV. The Cytoplasmic segment spans residues 34 to 52; sequence GVLYLEWLDAFGEGKGKTA. Residues 53-73 form a helical membrane-spanning segment; that stretch reads WVGSLANGIGLLASPVCSICV. Residues 74–79 lie on the Extracellular side of the membrane; it reads SSFGAR. The chain crosses the membrane as a helical span at residues 80-100; that stretch reads PVAIFSGFMVAGGLMMSSFAP. The Cytoplasmic portion of the chain corresponds to 101-102; the sequence is NI. The chain crosses the membrane as a helical span at residues 103–123; the sequence is YFLYLSYGIVVGLGCGLLYNA. Topologically, residues 124–136 are extracellular; it reads TVTITCQYFDKRR. A helical membrane pass occupies residues 137-157; that stretch reads GLALGLISTGSSVGLFIYAAL. At 158 to 163 the chain is on the cytoplasmic side; that stretch reads QRELIE. A helical membrane pass occupies residues 164-184; that stretch reads LYGLDGCLLIVGALSLNILAC. Over 185-302 the chain is Extracellular; sequence GSLMRPLESS…EETVVLFKNR (118 aa). The helical transmembrane segment at 303–323 threads the bilayer; that stretch reads VFSALFFAILLFDIGGFPPSL. The Cytoplasmic portion of the chain corresponds to 324–340; sequence LMEDIARSANINEEDYH. A helical transmembrane segment spans residues 341-361; that stretch reads MPLVSIIGIMTAIGKLILGIL. Over 362 to 369 the chain is Extracellular; sequence ADFKWVNT. A helical membrane pass occupies residues 370-390; sequence LYLYVLTLLMMGAALLAIPFA. Residues 391 to 395 are Cytoplasmic-facing; that stretch reads RSYFT. A helical membrane pass occupies residues 396–416; the sequence is LAVLSGILGFLTGNWSIFPYV. The Extracellular portion of the chain corresponds to 417-430; it reads TTKTVGIEKLTHAY. Residues 431 to 451 traverse the membrane as a helical segment; it reads GILMFFAGLGNSLGPPIVGWF. Residues 452 to 460 are Cytoplasmic-facing; it reads YDWTQEYDT. The helical transmembrane segment at 461–481 threads the bilayer; the sequence is AFYFSGFCVLLGGFLLLLAAL. Topologically, residues 482-507 are extracellular; the sequence is PCWNACTDRSSKLPPNTYSYKVASSA.

Belongs to the major facilitator superfamily. Monocarboxylate porter (TC 2.A.1.13) family.

It is found in the cell membrane. It catalyses the reaction creatine(in) = creatine(out). The catalysed reaction is (R)-carnitine(in) = (R)-carnitine(out). In terms of biological role, extracellular pH-and Na(+)-sensitive low-affinity creatine transporter. Also functions as a pH-independent carnitine efflux transporter. In Gallus gallus (Chicken), this protein is Monocarboxylate transporter 9 (SLC16A9).